The primary structure comprises 326 residues: Beta-ketoacyl-[acyl-carrier-protein] synthase III (326 aa).

Active-site residues include Cys-111 and His-252. The tract at residues 253–257 (QANIR) is ACP-binding. Asn-282 is an active-site residue.

Belongs to the thiolase-like superfamily. FabH family. In terms of assembly, homodimer.

It localises to the plastid. The protein resides in the chloroplast. The catalysed reaction is malonyl-[ACP] + acetyl-CoA + H(+) = 3-oxobutanoyl-[ACP] + CO2 + CoA. Its pathway is lipid metabolism; fatty acid biosynthesis. In terms of biological role, catalyzes the condensation reaction of fatty acid synthesis by the addition to an acyl acceptor of two carbons from malonyl-ACP. Catalyzes the first condensation reaction which initiates fatty acid synthesis and may therefore play a role in governing the total rate of fatty acid production. Possesses both acetoacetyl-ACP synthase and acetyl transacylase activities. Its substrate specificity determines the biosynthesis of branched-chain and/or straight-chain of fatty acids. In Porphyra purpurea (Red seaweed), this protein is Beta-ketoacyl-[acyl-carrier-protein] synthase III.